The sequence spans 1499 residues: DNA-directed RNA polymerase subunit beta' (1499 aa).

Positions 67, 69, 82, and 85 each coordinate Zn(2+). Mg(2+)-binding residues include aspartate 499, aspartate 501, and aspartate 503. Residues cysteine 867, cysteine 943, cysteine 950, and cysteine 953 each coordinate Zn(2+).

The protein belongs to the RNA polymerase beta' chain family. The RNAP catalytic core consists of 2 alpha, 1 beta, 1 beta' and 1 omega subunit. When a sigma factor is associated with the core the holoenzyme is formed, which can initiate transcription. It depends on Mg(2+) as a cofactor. The cofactor is Zn(2+).

It catalyses the reaction RNA(n) + a ribonucleoside 5'-triphosphate = RNA(n+1) + diphosphate. In terms of biological role, DNA-dependent RNA polymerase catalyzes the transcription of DNA into RNA using the four ribonucleoside triphosphates as substrates. The sequence is that of DNA-directed RNA polymerase subunit beta' from Prosthecochloris aestuarii (strain DSM 271 / SK 413).